A 296-amino-acid chain; its full sequence is Nucleotide-binding protein SUB0630 (296 aa).

ATP is bound at residue 13–20 (GMSGAGKT). Position 63–66 (63–66 (DMRS)) interacts with GTP.

Belongs to the RapZ-like family.

Functionally, displays ATPase and GTPase activities. The polypeptide is Nucleotide-binding protein SUB0630 (Streptococcus uberis (strain ATCC BAA-854 / 0140J)).